The chain runs to 429 residues: UDP-N-acetylglucosamine 1-carboxyvinyltransferase (429 aa).

22–23 (KN) contributes to the phosphoenolpyruvate binding site. Arg102 provides a ligand contact to UDP-N-acetyl-alpha-D-glucosamine. The active-site Proton donor is the Cys126. Cys126 is subject to 2-(S-cysteinyl)pyruvic acid O-phosphothioketal. UDP-N-acetyl-alpha-D-glucosamine is bound by residues 131–135 (RPVDL), Asp316, and Ile338.

This sequence belongs to the EPSP synthase family. MurA subfamily.

It is found in the cytoplasm. It catalyses the reaction phosphoenolpyruvate + UDP-N-acetyl-alpha-D-glucosamine = UDP-N-acetyl-3-O-(1-carboxyvinyl)-alpha-D-glucosamine + phosphate. It participates in cell wall biogenesis; peptidoglycan biosynthesis. In terms of biological role, cell wall formation. Adds enolpyruvyl to UDP-N-acetylglucosamine. In Methylobacterium nodulans (strain LMG 21967 / CNCM I-2342 / ORS 2060), this protein is UDP-N-acetylglucosamine 1-carboxyvinyltransferase.